Consider the following 614-residue polypeptide: Probable LRR receptor-like serine/threonine-protein kinase At5g45780 (614 aa).

The N-terminal stretch at 1-26 (MEISLMKFLFLGIWVYYYSVLDSVSA) is a signal peptide. The Extracellular portion of the chain corresponds to 27–242 (MDSLLSPKGV…NSKHHSLVLS (216 aa)). LRR repeat units lie at residues 104 to 126 (HLHT…LGQL), 128 to 151 (ELET…GFLT), 152 to 174 (HLNY…VAGL), and 176 to 197 (GLSF…ISAK). N-linked (GlcNAc...) asparagine glycosylation is found at Asn186, Asn193, and Asn224. The helical transmembrane segment at 243–263 (FAFGIVVAFIISLMFLFFWVL) threads the bilayer. Topologically, residues 264–614 (WHRSRLSRSH…IEAIELSGPR (351 aa)) are cytoplasmic. Thr297 carries the post-translational modification Phosphothreonine. Positions 300–576 (FSPKNILGQG…QVLKVLEGLV (277 aa)) constitute a Protein kinase domain. 306-314 (LGQGGFGMV) contacts ATP. Thr323 is modified (phosphothreonine). Lys328 is a binding site for ATP. A Phosphoserine modification is found at Ser380. Residue Asp426 is the Proton acceptor of the active site. 3 positions are modified to phosphothreonine: Thr459, Thr460, and Thr465. Residue Tyr473 is modified to Phosphotyrosine. Position 475 is a phosphoserine (Ser475). Phosphothreonine is present on Thr476. Position 480 is a phosphoserine (Ser480). Thr555 carries the post-translational modification Phosphothreonine.

It belongs to the protein kinase superfamily. Ser/Thr protein kinase family.

It is found in the membrane. The enzyme catalyses L-seryl-[protein] + ATP = O-phospho-L-seryl-[protein] + ADP + H(+). The catalysed reaction is L-threonyl-[protein] + ATP = O-phospho-L-threonyl-[protein] + ADP + H(+). This chain is Probable LRR receptor-like serine/threonine-protein kinase At5g45780, found in Arabidopsis thaliana (Mouse-ear cress).